Consider the following 95-residue polypeptide: uncharacterized protein (95 aa).

Residues 29 to 53 (LVSTATCMAALFLRFKLIAWVAFIL) form a helical membrane-spanning segment.

The protein resides in the membrane. This is an uncharacterized protein from Schizosaccharomyces pombe (strain 972 / ATCC 24843) (Fission yeast).